A 186-amino-acid polypeptide reads, in one-letter code: Protein YABBY 2 (186 aa).

Residues Cys17 to Cys44 form a C4-type zinc finger.

It belongs to the YABBY family. Expressed in leaf blades, leaf sheaths and flowers.

It localises to the nucleus. This Oryza sativa subsp. japonica (Rice) protein is Protein YABBY 2 (YAB2).